The chain runs to 247 residues: Acetoacetate decarboxylase (247 aa).

The Schiff-base intermediate with acetoacetate role is filled by Lys116.

This sequence belongs to the ADC family.

The catalysed reaction is acetoacetate + H(+) = acetone + CO2. Its function is as follows. Catalyzes the conversion of acetoacetate to acetone and carbon dioxide. This is Acetoacetate decarboxylase from Ralstonia nicotianae (strain ATCC BAA-1114 / GMI1000) (Ralstonia solanacearum).